The following is a 96-amino-acid chain: Cysteine proteinase (96 aa).

A disulfide bridge links C25 with C79. Active-site residues include H31 and N58.

It belongs to the peptidase C1 family.

This chain is Cysteine proteinase, found in Carica papaya (Papaya).